The chain runs to 283 residues: Phosphatidylserine decarboxylase proenzyme (283 aa).

Active-site charge relay system; for autoendoproteolytic cleavage activity residues include Asp-89, His-146, and Ser-249. Catalysis depends on Ser-249, which acts as the Schiff-base intermediate with substrate; via pyruvic acid; for decarboxylase activity. Pyruvic acid (Ser); by autocatalysis is present on Ser-249.

This sequence belongs to the phosphatidylserine decarboxylase family. PSD-B subfamily. Prokaryotic type I sub-subfamily. In terms of assembly, heterodimer of a large membrane-associated beta subunit and a small pyruvoyl-containing alpha subunit. Pyruvate serves as cofactor. Post-translationally, is synthesized initially as an inactive proenzyme. Formation of the active enzyme involves a self-maturation process in which the active site pyruvoyl group is generated from an internal serine residue via an autocatalytic post-translational modification. Two non-identical subunits are generated from the proenzyme in this reaction, and the pyruvate is formed at the N-terminus of the alpha chain, which is derived from the carboxyl end of the proenzyme. The autoendoproteolytic cleavage occurs by a canonical serine protease mechanism, in which the side chain hydroxyl group of the serine supplies its oxygen atom to form the C-terminus of the beta chain, while the remainder of the serine residue undergoes an oxidative deamination to produce ammonia and the pyruvoyl prosthetic group on the alpha chain. During this reaction, the Ser that is part of the protease active site of the proenzyme becomes the pyruvoyl prosthetic group, which constitutes an essential element of the active site of the mature decarboxylase.

It is found in the cell membrane. The catalysed reaction is a 1,2-diacyl-sn-glycero-3-phospho-L-serine + H(+) = a 1,2-diacyl-sn-glycero-3-phosphoethanolamine + CO2. It functions in the pathway phospholipid metabolism; phosphatidylethanolamine biosynthesis; phosphatidylethanolamine from CDP-diacylglycerol: step 2/2. Its function is as follows. Catalyzes the formation of phosphatidylethanolamine (PtdEtn) from phosphatidylserine (PtdSer). In Legionella pneumophila subsp. pneumophila (strain Philadelphia 1 / ATCC 33152 / DSM 7513), this protein is Phosphatidylserine decarboxylase proenzyme.